Consider the following 213-residue polypeptide: Protein Syd (213 aa).

The protein belongs to the Syd family.

Its subcellular location is the cell inner membrane. In terms of biological role, interacts with the SecY protein in vivo. May bind preferentially to an uncomplexed state of SecY, thus functioning either as a chelating agent for excess SecY in the cell or as a regulatory factor that negatively controls the translocase function. The sequence is that of Protein Syd from Shewanella pealeana (strain ATCC 700345 / ANG-SQ1).